Consider the following 445-residue polypeptide: Signal recognition particle 54 kDa protein (445 aa).

GTP is bound by residues 106-113, 186-190, and 244-247; these read GLQGSGKT, DTAGR, and TKLD.

It belongs to the GTP-binding SRP family. SRP54 subfamily. In terms of assembly, part of the signal recognition particle protein translocation system, which is composed of SRP and FtsY. Archaeal SRP consists of a 7S RNA molecule of 300 nucleotides and two protein subunits: SRP54 and SRP19.

Its subcellular location is the cytoplasm. The catalysed reaction is GTP + H2O = GDP + phosphate + H(+). In terms of biological role, involved in targeting and insertion of nascent membrane proteins into the cytoplasmic membrane. Binds to the hydrophobic signal sequence of the ribosome-nascent chain (RNC) as it emerges from the ribosomes. The SRP-RNC complex is then targeted to the cytoplasmic membrane where it interacts with the SRP receptor FtsY. The sequence is that of Signal recognition particle 54 kDa protein from Methanobrevibacter smithii (strain ATCC 35061 / DSM 861 / OCM 144 / PS).